Reading from the N-terminus, the 515-residue chain is 1-pyrroline-5-carboxylate dehydrogenase (515 aa).

Residues Glu-286 and Cys-320 contribute to the active site.

The protein belongs to the aldehyde dehydrogenase family. RocA subfamily.

It carries out the reaction L-glutamate 5-semialdehyde + NAD(+) + H2O = L-glutamate + NADH + 2 H(+). It functions in the pathway amino-acid degradation; L-proline degradation into L-glutamate; L-glutamate from L-proline: step 2/2. This is 1-pyrroline-5-carboxylate dehydrogenase from Geobacillus thermodenitrificans (strain NG80-2).